The sequence spans 386 residues: Putative 8-amino-7-oxononanoate synthase (386 aa).

Arg-22 provides a ligand contact to substrate. Residue 109-110 (GY) coordinates pyridoxal 5'-phosphate. His-134 lines the substrate pocket. Pyridoxal 5'-phosphate contacts are provided by residues Ser-182, 207–210 (DEAH), and 238–241 (TLSK). Lys-241 carries the N6-(pyridoxal phosphate)lysine modification. Thr-356 provides a ligand contact to substrate.

The protein belongs to the class-II pyridoxal-phosphate-dependent aminotransferase family. BioF subfamily. As to quaternary structure, homodimer. It depends on pyridoxal 5'-phosphate as a cofactor.

It carries out the reaction 6-carboxyhexanoyl-[ACP] + L-alanine + H(+) = (8S)-8-amino-7-oxononanoate + holo-[ACP] + CO2. It participates in cofactor biosynthesis; biotin biosynthesis. In terms of biological role, catalyzes the decarboxylative condensation of pimeloyl-[acyl-carrier protein] and L-alanine to produce 8-amino-7-oxononanoate (AON), [acyl-carrier protein], and carbon dioxide. In Trichormus variabilis (strain ATCC 29413 / PCC 7937) (Anabaena variabilis), this protein is Putative 8-amino-7-oxononanoate synthase (bioF).